Reading from the N-terminus, the 607-residue chain is Glutamine--fructose-6-phosphate aminotransferase [isomerizing] (607 aa).

C2 serves as the catalytic Nucleophile; for GATase activity. The Glutamine amidotransferase type-2 domain occupies 2–217 (CGIIGIIGND…DGDWAVLTRN (216 aa)). SIS domains lie at 283–422 (IGID…ARGA) and 455–597 (VCHD…VDQP). Catalysis depends on K602, which acts as the For Fru-6P isomerization activity.

Homodimer.

It is found in the cytoplasm. It catalyses the reaction D-fructose 6-phosphate + L-glutamine = D-glucosamine 6-phosphate + L-glutamate. Functionally, catalyzes the first step in hexosamine metabolism, converting fructose-6P into glucosamine-6P using glutamine as a nitrogen source. In Brucella suis biovar 1 (strain 1330), this protein is Glutamine--fructose-6-phosphate aminotransferase [isomerizing].